The chain runs to 732 residues: 1,4-alpha-glucan branching enzyme GlgB (732 aa).

Aspartate 412 (nucleophile) is an active-site residue. Residue glutamate 465 is the Proton donor of the active site.

The protein belongs to the glycosyl hydrolase 13 family. GlgB subfamily. In terms of assembly, monomer.

The catalysed reaction is Transfers a segment of a (1-&gt;4)-alpha-D-glucan chain to a primary hydroxy group in a similar glucan chain.. Its pathway is glycan biosynthesis; glycogen biosynthesis. In terms of biological role, catalyzes the formation of the alpha-1,6-glucosidic linkages in glycogen by scission of a 1,4-alpha-linked oligosaccharide from growing alpha-1,4-glucan chains and the subsequent attachment of the oligosaccharide to the alpha-1,6 position. The polypeptide is 1,4-alpha-glucan branching enzyme GlgB (Pseudomonas aeruginosa (strain ATCC 15692 / DSM 22644 / CIP 104116 / JCM 14847 / LMG 12228 / 1C / PRS 101 / PAO1)).